Here is a 349-residue protein sequence, read N- to C-terminus: Aspartate-semialdehyde dehydrogenase (349 aa).

NADP(+)-binding positions include 12 to 15 (TGSV) and 39 to 40 (NS). Arginine 113 provides a ligand contact to phosphate. Cysteine 148 serves as the catalytic Acyl-thioester intermediate. Glutamine 175 serves as a coordination point for substrate. Residue 178–179 (SG) participates in NADP(+) binding. Glutamate 201 is a substrate binding site. Lysine 204 contributes to the phosphate binding site. Residue arginine 234 participates in substrate binding. The active-site Proton acceptor is the histidine 241. 326–327 (NT) lines the NADP(+) pocket.

Belongs to the aspartate-semialdehyde dehydrogenase family. As to quaternary structure, homodimer.

The catalysed reaction is L-aspartate 4-semialdehyde + phosphate + NADP(+) = 4-phospho-L-aspartate + NADPH + H(+). It functions in the pathway amino-acid biosynthesis; L-lysine biosynthesis via DAP pathway; (S)-tetrahydrodipicolinate from L-aspartate: step 2/4. The protein operates within amino-acid biosynthesis; L-methionine biosynthesis via de novo pathway; L-homoserine from L-aspartate: step 2/3. It participates in amino-acid biosynthesis; L-threonine biosynthesis; L-threonine from L-aspartate: step 2/5. Functionally, catalyzes the NADPH-dependent formation of L-aspartate-semialdehyde (L-ASA) by the reductive dephosphorylation of L-aspartyl-4-phosphate. This is Aspartate-semialdehyde dehydrogenase from Leptospira interrogans serogroup Icterohaemorrhagiae serovar copenhageni (strain Fiocruz L1-130).